A 121-amino-acid polypeptide reads, in one-letter code: Large ribosomal subunit protein uL18 (121 aa).

The protein belongs to the universal ribosomal protein uL18 family. As to quaternary structure, part of the 50S ribosomal subunit; part of the 5S rRNA/L5/L18/L25 subcomplex. Contacts the 5S and 23S rRNAs.

In terms of biological role, this is one of the proteins that bind and probably mediate the attachment of the 5S RNA into the large ribosomal subunit, where it forms part of the central protuberance. In Moorella thermoacetica (strain ATCC 39073 / JCM 9320), this protein is Large ribosomal subunit protein uL18.